A 473-amino-acid chain; its full sequence is MEIFHISAECYPMAKVGGLADVVGALPKYQKNAGNDVRVVVPAYDTKFKKENNFECVHWGTVKLGNFNFPFSVLKESSDKLGYELYLIEIKELFNRPNVYGYEDDIERFLSFQIAVLDWIIARNKVPDIINCHDHHTGLIPFLLQFAYKYENLKDVKTVITIHNGLYQGWFGFDKLYYLPEFDLKHIGFLEWNNCINSLAVGVKCANAVTTVSPSYLNEINYSANGLESLFNSVRNKSKGILNGIDIEIWNPLKDQMIAANYSIENFEIGKQKNKEKLCEQFELDPSKPLFSFIGRLFEEKGGDLLPQASALALSEHFEEINILILGSGNAEIESQLTQLRNDYKGNYNVFIGYNEELAHLIYAGSDYILMPSRVEPCGLNQMYAMRYGTIPIVRRTGGLRDTVIDFGDDGNGICHDQASVGDICYSINRAVKLYDDKISFNTVLRRGMAADHSWERVCQEYIEIYNLIIQQK.

Lysine 15 contributes to the ADP-alpha-D-glucose binding site.

It belongs to the glycosyltransferase 1 family. Bacterial/plant glycogen synthase subfamily.

It catalyses the reaction [(1-&gt;4)-alpha-D-glucosyl](n) + ADP-alpha-D-glucose = [(1-&gt;4)-alpha-D-glucosyl](n+1) + ADP + H(+). It participates in glycan biosynthesis; glycogen biosynthesis. Synthesizes alpha-1,4-glucan chains using ADP-glucose. The chain is Glycogen synthase from Flavobacterium johnsoniae (strain ATCC 17061 / DSM 2064 / JCM 8514 / BCRC 14874 / CCUG 350202 / NBRC 14942 / NCIMB 11054 / UW101) (Cytophaga johnsonae).